A 96-amino-acid polypeptide reads, in one-letter code: Large ribosomal subunit protein uL23 (96 aa).

The protein belongs to the universal ribosomal protein uL23 family. Part of the 50S ribosomal subunit. Contacts protein L29, and trigger factor when it is bound to the ribosome.

Functionally, one of the early assembly proteins it binds 23S rRNA. One of the proteins that surrounds the polypeptide exit tunnel on the outside of the ribosome. Forms the main docking site for trigger factor binding to the ribosome. In Caldanaerobacter subterraneus subsp. tengcongensis (strain DSM 15242 / JCM 11007 / NBRC 100824 / MB4) (Thermoanaerobacter tengcongensis), this protein is Large ribosomal subunit protein uL23.